A 79-amino-acid polypeptide reads, in one-letter code: Conotoxin Leo-O1 (79 aa).

The N-terminal stretch at 1 to 22 is a signal peptide; the sequence is MKLTCMMLVAVLFLTAWTFVTA. Residues 23–51 constitute a propeptide that is removed on maturation; the sequence is NVSRNGLENLFPEERHEMMNPEAAKLNNR. 3 cysteine pairs are disulfide-bonded: Cys-53–Cys-70, Cys-60–Cys-74, and Cys-69–Cys-78.

Belongs to the conotoxin O1 superfamily. Expressed by the venom duct.

The protein resides in the secreted. In Conus leopardus (Leopard cone), this protein is Conotoxin Leo-O1.